A 790-amino-acid chain; its full sequence is uncharacterized protein (790 aa).

In terms of domain architecture, TBDR plug spans 37 to 172 (APVPVPVNGN…NGGVIDAKIK (136 aa)). The region spanning 178–790 (DSKVKLGYRT…TFWLDVSMKF (613 aa)) is the TBDR beta-barrel domain.

This sequence belongs to the TonB-dependent receptor family.

Its subcellular location is the cell outer membrane. This is an uncharacterized protein from Escherichia coli (strain K12).